Here is a 156-residue protein sequence, read N- to C-terminus: Small ribosomal subunit protein uS7 (156 aa).

The protein belongs to the universal ribosomal protein uS7 family. As to quaternary structure, part of the 30S ribosomal subunit. Contacts proteins S9 and S11.

Its function is as follows. One of the primary rRNA binding proteins, it binds directly to 16S rRNA where it nucleates assembly of the head domain of the 30S subunit. Is located at the subunit interface close to the decoding center, probably blocks exit of the E-site tRNA. This is Small ribosomal subunit protein uS7 from Dinoroseobacter shibae (strain DSM 16493 / NCIMB 14021 / DFL 12).